Reading from the N-terminus, the 170-residue chain is Peroxidase 2 (170 aa).

Asn9 is a glycosylation site (N-linked (GlcNAc...) asparagine). His24 contributes to the heme b binding site. Thr25 serves as a coordination point for Ca(2+). A disulfide bridge links Cys31 with Cys59. Residues Asp73, Thr76, and Asp81 each contribute to the Ca(2+) site.

Belongs to the peroxidase family. Classical plant (class III) peroxidase subfamily. Requires Ca(2+) as cofactor. Heme b is required as a cofactor.

It catalyses the reaction 2 a phenolic donor + H2O2 = 2 a phenolic radical donor + 2 H2O. Removal of H(2)O(2), oxidation of toxic reductants, biosynthesis and degradation of lignin, suberization, auxin catabolism, response to environmental stresses such as wounding, pathogen attack and oxidative stress. These functions might be dependent on each isozyme/isoform in each plant tissue. In terms of biological role, involved in defense response to powdery meldew fungus. The sequence is that of Peroxidase 2 from Hordeum vulgare (Barley).